Here is a 406-residue protein sequence, read N- to C-terminus: LIM/homeobox protein Lhx1 (406 aa).

LIM zinc-binding domains lie at 4–54 (CAGC…CKND) and 63–117 (CAGC…CKED). Positions 125–136 (AKENSLHSATTG) are enriched in polar residues. Disordered regions lie at residues 125 to 187 (AKEN…RTTI) and 296 to 372 (FPQG…SAEV). Residues 137–148 (SDPSLSPDSQDP) are compositionally biased toward low complexity. Residues 151–167 (DDAKDSESANVSDKETG) are compositionally biased toward basic and acidic residues. A DNA-binding region (homeobox) is located at residues 180-239 (RRGPRTTIKAKQLETLKAAFAATPKPTRHIREQLAQETGLNMRVIQVWFQNRRSKERRMK).

The protein localises to the nucleus. In terms of biological role, transcriptional factor that defines subclasses of motoneurons that segregate into columns in the spinal cord and select distinct axon pathways. Acts in conjunction with ISL-2. The chain is LIM/homeobox protein Lhx1 (LHX1) from Gallus gallus (Chicken).